Reading from the N-terminus, the 399-residue chain is Exodeoxyribonuclease 7 large subunit (399 aa).

Belongs to the XseA family. Heterooligomer composed of large and small subunits.

The protein resides in the cytoplasm. It catalyses the reaction Exonucleolytic cleavage in either 5'- to 3'- or 3'- to 5'-direction to yield nucleoside 5'-phosphates.. Bidirectionally degrades single-stranded DNA into large acid-insoluble oligonucleotides, which are then degraded further into small acid-soluble oligonucleotides. The polypeptide is Exodeoxyribonuclease 7 large subunit (Clostridium acetobutylicum (strain ATCC 824 / DSM 792 / JCM 1419 / IAM 19013 / LMG 5710 / NBRC 13948 / NRRL B-527 / VKM B-1787 / 2291 / W)).